Consider the following 457-residue polypeptide: Hydrogenobyrinate a,c-diamide synthase (457 aa).

The GATase cobBQ-type domain maps to 255–441; sequence TVAIAAGRAF…LHTHPAATPG (187 aa). C337 acts as the Nucleophile in catalysis.

This sequence belongs to the CobB/CbiA family. Mg(2+) is required as a cofactor.

The catalysed reaction is hydrogenobyrinate + 2 L-glutamine + 2 ATP + 2 H2O = hydrogenobyrinate a,c-diamide + 2 L-glutamate + 2 ADP + 2 phosphate + 2 H(+). It participates in cofactor biosynthesis; adenosylcobalamin biosynthesis; cob(II)yrinate a,c-diamide from precorrin-2 (aerobic route): step 9/10. Its function is as follows. Catalyzes the ATP-dependent amidation of the two carboxylate groups at positions a and c of hydrogenobyrinate, using either L-glutamine or ammonia as the nitrogen source. The polypeptide is Hydrogenobyrinate a,c-diamide synthase (Mycobacterium bovis (strain ATCC BAA-935 / AF2122/97)).